A 323-amino-acid chain; its full sequence is Probable cell division protein WhiA (323 aa).

Positions 275–309 (TLKELGEMLTTGQVSKSGINHRLRKLDQIAERLRS) form a DNA-binding region, H-T-H motif.

It belongs to the WhiA family.

Its function is as follows. Involved in cell division and chromosome segregation. In Listeria monocytogenes serotype 4a (strain HCC23), this protein is Probable cell division protein WhiA.